Reading from the N-terminus, the 695-residue chain is Elongation factor G 2 (695 aa).

A tr-type G domain is found at 5–280 (SKYRNIGIFA…AVVDYLPSPT (276 aa)). GTP is bound by residues 14–21 (AHVDAGKT), 78–82 (DTPGH), and 132–135 (NKLD).

It belongs to the TRAFAC class translation factor GTPase superfamily. Classic translation factor GTPase family. EF-G/EF-2 subfamily.

The protein localises to the cytoplasm. In terms of biological role, catalyzes the GTP-dependent ribosomal translocation step during translation elongation. During this step, the ribosome changes from the pre-translocational (PRE) to the post-translocational (POST) state as the newly formed A-site-bound peptidyl-tRNA and P-site-bound deacylated tRNA move to the P and E sites, respectively. Catalyzes the coordinated movement of the two tRNA molecules, the mRNA and conformational changes in the ribosome. This is Elongation factor G 2 from Photobacterium profundum (strain SS9).